The primary structure comprises 476 residues: Protein transport protein Sec61 subunit alpha (476 aa).

The Cytoplasmic segment spans residues 2 to 33; that stretch reads GIKFLEVIKPFCAVLPEIQKPERKIQFREKVL. The helical transmembrane segment at 34 to 53 threads the bilayer; it reads WTAITLFIFLVCCQIPLFGI. The Lumenal segment spans residues 54 to 76; the sequence is MSSDSADPFYWMRVILASNRGTL. Residues 77 to 96 form a helical membrane-spanning segment; it reads MELGISPIVTSGLIMQLLAG. Residues 97–117 lie on the Cytoplasmic side of the membrane; sequence AKIIGVGDTPKDRALFNGAQK. A helical membrane pass occupies residues 118–138; that stretch reads LFGMIITIGQAIVYVMTGMYG. The Lumenal segment spans residues 139-144; sequence DPSEMG. The chain crosses the membrane as a helical span at residues 145 to 165; it reads AGICLLIIIQLFVAGLIVLLL. Topologically, residues 166-172 are cytoplasmic; it reads DELLQKG. A helical membrane pass occupies residues 173–193; sequence YGLGSGISLFIATNICETIVW. Residues 194–240 lie on the Lumenal side of the membrane; it reads KAFSPTTVNTGRGTEFEGAIIALFHLLATRTDKVRALREGFYRQNLP. Residues 241–261 form a helical membrane-spanning segment; sequence NLMNLIATVFVFAVVIYFQGF. At 262-288 the chain is on the cytoplasmic side; sequence RVDLPIKSARYRGQYNTYPIKLFYTSN. A helical transmembrane segment spans residues 289 to 309; the sequence is IPIILQSALVSNLYVISQMLS. Topologically, residues 310–354 are lumenal; it reads TRFSGNFLVNLLGTWSDATSGGPARAYPVAGLCYYLSPPESFGSV. Residues 355–375 form a helical membrane-spanning segment; that stretch reads LDDPVHAGIYIVFMLGSCAFF. The Cytoplasmic portion of the chain corresponds to 376–420; the sequence is SKTWIEVSGSSAKDVAKQLKEQQMVMRGHRETSMVHELNRYIPTA. Residues 421-441 traverse the membrane as a helical segment; sequence AAFGGLCIGGLSVMADFLGAI. Topologically, residues 442-445 are lumenal; that stretch reads GSGT. The helical transmembrane segment at 446 to 462 threads the bilayer; it reads GILLAVTIIYQYFEIFV. Over 463–476 the chain is Cytoplasmic; it reads KEQSEVGSMGALLF.

Belongs to the SecY/SEC61-alpha family. As to quaternary structure, the SEC61 channel-forming translocon complex consists of channel-forming core components SEC61A1, SEC61B and SEC61G and different auxiliary components such as SEC62 and SEC63. The SEC61 channel associates with the multi-pass translocon (MPT) complex.

It is found in the endoplasmic reticulum membrane. Its function is as follows. Component of SEC61 channel-forming translocon complex that mediates transport of signal peptide-containing precursor polypeptides across the endoplasmic reticulum (ER). Forms a ribosome receptor and a gated pore in the ER membrane, both functions required for cotranslational translocation of nascent polypeptides. May cooperate with auxiliary protein SEC62, SEC63 and HSPA5/BiP to enable post-translational transport of small presecretory proteins. The SEC61 channel is also involved in ER membrane insertion of transmembrane proteins: it mediates membrane insertion of the first few transmembrane segments of proteins, while insertion of subsequent transmembrane regions of multi-pass membrane proteins is mediated by the multi-pass translocon (MPT) complex. The chain is Protein transport protein Sec61 subunit alpha (sec61a) from Hemitripterus americanus (Sea raven).